Consider the following 462-residue polypeptide: Integrator complex subunit 12 (462 aa).

A disordered region spans residues 42–129 (GIDSSYRPSQ…LEKPETQSSP (88 aa)). Positions 59–86 (ISSTKNISIKQEPKISSSLPSGNNNGKV) are enriched in polar residues. A Glycyl lysine isopeptide (Lys-Gly) (interchain with G-Cter in SUMO2) cross-link involves residue Lys-68. The span at 88–124 (TTEKVKKEAEKRPADKMKSDITEGVDIPKKPRLEKPE) shows a compositional bias: basic and acidic residues. Position 128 is a phosphoserine (Ser-128). A PHD-type zinc finger spans residues 159-215 (GLACVVCRQMMVASGNQLVECQECHNLYHRDCHKPQVTDKEANDPRLVWYCARCTRQ). Lys-254 is covalently cross-linked (Glycyl lysine isopeptide (Lys-Gly) (interchain with G-Cter in SUMO2)). A compositionally biased stretch (polar residues) spans 301-328 (SSAGPSTAKLSSTTQNSTGKPATSSANQ). Positions 301–462 (SSAGPSTAKL…KKAAQKKLKK (162 aa)) are disordered. 2 stretches are compositionally biased toward low complexity: residues 347 to 358 (KIGSNNSTTPTV) and 396 to 437 (GNSS…GPTS). Over residues 449–462 (QMVKKKAAQKKLKK) the composition is skewed to basic residues.

Belongs to the Integrator subunit 12 family. In terms of assembly, component of the Integrator complex, composed of core subunits INTS1, INTS2, INTS3, INTS4, INTS5, INTS6, INTS7, INTS8, INTS9/RC74, INTS10, INTS11/CPSF3L, INTS12, INTS13, INTS14 and INTS15. The core complex associates with protein phosphatase 2A subunits PPP2CA and PPP2R1A, to form the Integrator-PP2A (INTAC) complex. In terms of processing, dephosphorylated at Ser-128 by the PNUTS-PP1 complex, promoting RNA polymerase II transcription pause-release.

It localises to the nucleus. Its function is as follows. Component of the integrator complex, a multiprotein complex that terminates RNA polymerase II (Pol II) transcription in the promoter-proximal region of genes. The integrator complex provides a quality checkpoint during transcription elongation by driving premature transcription termination of transcripts that are unfavorably configured for transcriptional elongation: the complex terminates transcription by (1) catalyzing dephosphorylation of the C-terminal domain (CTD) of Pol II subunit POLR2A/RPB1 and SUPT5H/SPT5, (2) degrading the exiting nascent RNA transcript via endonuclease activity and (3) promoting the release of Pol II from bound DNA. The integrator complex is also involved in terminating the synthesis of non-coding Pol II transcripts, such as enhancer RNAs (eRNAs), small nuclear RNAs (snRNAs), telomerase RNAs and long non-coding RNAs (lncRNAs). Mediates recruitment of cytoplasmic dynein to the nuclear envelope, probably as component of the integrator complex. This chain is Integrator complex subunit 12 (INTS12), found in Macaca fascicularis (Crab-eating macaque).